A 463-amino-acid polypeptide reads, in one-letter code: Nucleobindin-1 (463 aa).

Positions 1-26 are cleaved as a signal peptide; it reads MPPSGPQGTLLLLPLLLLLLLRAVLA. Residue Ser-86 is modified to Phosphoserine. A Phosphothreonine modification is found at Thr-148. The stretch at 150-218 forms a coiled coil; that stretch reads EARDLELLIQ…QQRRHREHPK (69 aa). The DNA-binding element occupies 172–218; it reads HHEEFKRYEMLKEHERRRYLESLGEEQRKEAERRLEEQQRRHREHPK. The span at 193 to 210 shows a compositional bias: basic and acidic residues; it reads SLGEEQRKEAERRLEEQQ. The segment at 193–221 is disordered; it reads SLGEEQRKEAERRLEEQQRRHREHPKVNV. Residues 228-321 are binds to GNAI2 and GNAI3; it reads LKEVWEELDG…VTLGEFLAST (94 aa). EF-hand domains lie at 240-275 and 292-327; these read PNRF…ELEK and ERLR…KEFG. Residues Asp-253, Asn-255, Asp-257, Glu-264, Asp-305, Asn-307, Asp-309, and Glu-316 each coordinate Ca(2+). The short motif at 303 to 333 is the GBA element; that stretch reads NVDTNQDRLVTLGEFLASTQRKEFGDTGEGW. Residues 341 to 409 adopt a coiled-coil conformation; sequence AYTEEELRRF…KQQQQQQQQQ (69 aa). The segment at 368 to 463 is disordered; that stretch reads LSQETEALGR…LPEVEVPQHL (96 aa). Position 369 is a phosphoserine (Ser-369). Basic and acidic residues predominate over residues 439 to 463; that stretch reads DQKEVDTSEKKLLERLPEVEVPQHL.

The protein belongs to the nucleobindin family. Interacts (via GBA motif) with guanine nucleotide-binding protein G(i) alpha subunits GNAI1, GNAI2 and GNAI3 with higher affinity for GNAI1 and GNAI3 than for GNAI2. Preferentially interacts with inactive rather than active GNAI3. Interaction with GNAI3 is inhibited when NUCB1 binds calcium, probably due to a conformational change which renders the GBA motif inaccessible.

The protein resides in the golgi apparatus. It is found in the cis-Golgi network membrane. The protein localises to the cytoplasm. Its subcellular location is the secreted. Functionally, major calcium-binding protein of the Golgi which may have a role in calcium homeostasis. Acts as a non-receptor guanine nucleotide exchange factor which binds to and activates alpha subunits of guanine nucleotide-binding proteins (G proteins). The polypeptide is Nucleobindin-1 (NUCB1) (Pongo abelii (Sumatran orangutan)).